The sequence spans 317 residues: 2-keto-3-deoxygluconate permease 1 (317 aa).

A run of 10 helical transmembrane segments spans residues 10–30, 47–67, 82–102, 106–126, 134–154, 159–179, 195–215, 217–237, 248–268, and 279–299; these read VPGG…TFAP, AAPL…VKAA, LLVA…EGIF, GVAI…ALVG, VGAI…IALG, ANIP…GMIL, PLLI…EMLL, GGLA…FFNI, IAGA…LAIA, and AAAA…TPVL.

It belongs to the KdgT transporter family.

The protein resides in the cell inner membrane. It carries out the reaction 2-dehydro-3-deoxy-D-gluconate(in) + H(+)(in) = 2-dehydro-3-deoxy-D-gluconate(out) + H(+)(out). In terms of biological role, catalyzes the proton-dependent uptake of 2-keto-3-deoxygluconate (KDG) into the cell. This is 2-keto-3-deoxygluconate permease 1 from Salmonella typhi.